The following is a 113-amino-acid chain: Large ribosomal subunit protein eL31 (113 aa).

Belongs to the eukaryotic ribosomal protein eL31 family.

This is Large ribosomal subunit protein eL31 (RPL31) from Candida glabrata (strain ATCC 2001 / BCRC 20586 / JCM 3761 / NBRC 0622 / NRRL Y-65 / CBS 138) (Yeast).